The sequence spans 422 residues: Protein phosphatase 1 regulatory subunit 36 (422 aa).

In terms of assembly, interacts with PPP1CA.

Its function is as follows. Inhibits phosphatase activity of protein phosphatase 1 (PP1) complexes. The protein is Protein phosphatase 1 regulatory subunit 36 (PPP1R36) of Homo sapiens (Human).